Here is a 157-residue protein sequence, read N- to C-terminus: Ribosomal RNA large subunit methyltransferase H (157 aa).

S-adenosyl-L-methionine is bound by residues leucine 73, glycine 105, and 124-129; that span reads LSLMTF.

This sequence belongs to the RNA methyltransferase RlmH family. In terms of assembly, homodimer.

It localises to the cytoplasm. The catalysed reaction is pseudouridine(1915) in 23S rRNA + S-adenosyl-L-methionine = N(3)-methylpseudouridine(1915) in 23S rRNA + S-adenosyl-L-homocysteine + H(+). Functionally, specifically methylates the pseudouridine at position 1915 (m3Psi1915) in 23S rRNA. The polypeptide is Ribosomal RNA large subunit methyltransferase H (Flavobacterium johnsoniae (strain ATCC 17061 / DSM 2064 / JCM 8514 / BCRC 14874 / CCUG 350202 / NBRC 14942 / NCIMB 11054 / UW101) (Cytophaga johnsonae)).